The chain runs to 98 residues: MTLIHMNILMAFSMSLVGLLMYRSHLMSALLCLEGMMLSLFVLAALTILNSHFTLANMMPIILLVFAACEAAIGLALLVMVSNTYGTDYVQNLNLLQC.

Helical transmembrane passes span 1 to 21 (MTLIHMNILMAFSMSLVGLLM), 29 to 49 (ALLCLEGMMLSLFVLAALTIL), and 61 to 81 (IILLVFAACEAAIGLALLVMV).

It belongs to the complex I subunit 4L family. Core subunit of respiratory chain NADH dehydrogenase (Complex I) which is composed of 45 different subunits.

The protein resides in the mitochondrion inner membrane. The enzyme catalyses a ubiquinone + NADH + 5 H(+)(in) = a ubiquinol + NAD(+) + 4 H(+)(out). Functionally, core subunit of the mitochondrial membrane respiratory chain NADH dehydrogenase (Complex I) which catalyzes electron transfer from NADH through the respiratory chain, using ubiquinone as an electron acceptor. Part of the enzyme membrane arm which is embedded in the lipid bilayer and involved in proton translocation. This is NADH-ubiquinone oxidoreductase chain 4L (MT-ND4L) from Eschrichtius robustus (California gray whale).